A 272-amino-acid chain; its full sequence is Insertion element IS600 uncharacterized 31 kDa protein (272 aa).

Residues 105–268 enclose the Integrase catalytic domain; that stretch reads APTAPNQVWV…SPAAFREKYH (164 aa).

The chain is Insertion element IS600 uncharacterized 31 kDa protein from Shigella sonnei.